The chain runs to 154 residues: Ribosome maturation factor RimP (154 aa).

It belongs to the RimP family.

The protein resides in the cytoplasm. In terms of biological role, required for maturation of 30S ribosomal subunits. In Clostridium novyi (strain NT), this protein is Ribosome maturation factor RimP.